The chain runs to 187 residues: GTP cyclohydrolase 1 (187 aa).

3 residues coordinate Zn(2+): C76, H79, and C148.

Belongs to the GTP cyclohydrolase I family. Toroid-shaped homodecamer, composed of two pentamers of five dimers.

It catalyses the reaction GTP + H2O = 7,8-dihydroneopterin 3'-triphosphate + formate + H(+). It participates in cofactor biosynthesis; 7,8-dihydroneopterin triphosphate biosynthesis; 7,8-dihydroneopterin triphosphate from GTP: step 1/1. The chain is GTP cyclohydrolase 1 from Streptococcus agalactiae serotype III (strain NEM316).